We begin with the raw amino-acid sequence, 406 residues long: MKRAVITGLGIVSSIGNNQQEVLASLREGRSGITFSQELKDSGMRSHVWGNVKLDTTGLIDRKVVRFMSDASIYAFLSMEQAIADAGLSPEAYQNNPRVGLIAGSGGGSPRFQVFGADAMRGPRGLKAVGPYVVTKAMASGVSACLATPFKIHGVNYSISSACATSAHCIGNAVEQIQLGKQDIVFAGGGEELCWEMACEFDAMGALSTKYNDTPEKASRTYDAHRDGFVIAGGGGMVVVEELEHALARGAHIYAEIVGYGATSDGADMVAPSGEGAVRCMKMAMHGVDTPIDYLNSHGTSTPVGDVKELAAIREVFGDKSPAISATKAMTGHSLGAAGVQEAIYSLLMLEHGFIAPSINIEELDEQAAGLNIVTETTDRELTTVMSNSFGFGGTNATLVMRKLKD.

The Ketosynthase family 3 (KS3) domain maps to 1-403 (MKRAVITGLG…GTNATLVMRK (403 aa)). Active-site for beta-ketoacyl synthase activity residues include cysteine 163, histidine 298, and histidine 333.

It belongs to the thiolase-like superfamily. Beta-ketoacyl-ACP synthases family. As to quaternary structure, homodimer.

Its subcellular location is the cytoplasm. The enzyme catalyses a fatty acyl-[ACP] + malonyl-[ACP] + H(+) = a 3-oxoacyl-[ACP] + holo-[ACP] + CO2. It carries out the reaction (3Z)-decenoyl-[ACP] + malonyl-[ACP] + H(+) = 3-oxo-(5Z)-dodecenoyl-[ACP] + holo-[ACP] + CO2. Its pathway is lipid metabolism; fatty acid biosynthesis. Functionally, involved in the type II fatty acid elongation cycle. Catalyzes the elongation of a wide range of acyl-ACP by the addition of two carbons from malonyl-ACP to an acyl acceptor. Can also use unsaturated fatty acids. Catalyzes a key reaction in unsaturated fatty acid (UFA) synthesis, the elongation of the cis-3-decenoyl-ACP produced by FabA. This is 3-oxoacyl-[acyl-carrier-protein] synthase 1 (fabB) from Escherichia coli O6:H1 (strain CFT073 / ATCC 700928 / UPEC).